We begin with the raw amino-acid sequence, 443 residues long: Endothelin receptor type B (443 aa).

Positions 1–26 (MQPLRSLCGRALVALIFACGVAGVQS) are cleaved as a signal peptide. Topologically, residues 27–102 (EERGFPPAGA…GPIEIKDTFK (76 aa)) are extracellular. A disordered region spans residues 53–89 (TFWPRGSNASLPRSSSPPQMPKGGRMAGPPARTLTPP). Residues 59 to 69 (SNASLPRSSSP) are compositionally biased toward polar residues. N-linked (GlcNAc...) asparagine glycosylation occurs at asparagine 60. Residues 103–127 (YINTVVSCLVFVLGIIGNSTLLRII) traverse the membrane as a helical segment. Residues 128 to 138 (YKNKCMRNGPN) lie on the Cytoplasmic side of the membrane. The helical transmembrane segment at 139–164 (ILIASLALGDLLHIIIDIPINVYKLL) threads the bilayer. Topologically, residues 165–176 (AEDWPFGVEMCK) are extracellular. The cysteines at positions 175 and 256 are disulfide-linked. Residues 177–198 (LVPFIQKASVGITVLSLCALSI) form a helical membrane-spanning segment. Topologically, residues 199–219 (DRYRAVASWSRIKGIGVPKWT) are cytoplasmic. Residues 220 to 244 (AVEIVLIWVVSVVLAVPEALGFDMI) form a helical membrane-spanning segment. Topologically, residues 245 to 272 (TTDYKGNRLRICLLHPTQKTAFMQFYKT) are extracellular. The helical transmembrane segment at 273–297 (AKDWWLFSFYFCLPLAITAFFYTLM) threads the bilayer. At 298-325 (TCEMLRKKSGMQIALNDHLKQRREVAKT) the chain is on the cytoplasmic side. Phosphoserine is present on serine 306. A helical membrane pass occupies residues 326–351 (VFCLVLVFALCWLPLHLSRILKLTLY). The Extracellular segment spans residues 352–363 (DQNDSNRCELLS). An N-linked (GlcNAc...) asparagine glycan is attached at asparagine 354. A helical transmembrane segment spans residues 364-390 (FLLVLDYIGINMASLNSCINPIALYLV). Over 391–443 (SKRFKNCFKSCLCCWCQSFEEKQSLEEKQSCLKFKANDHGYDNFRSSNKYSSS) the chain is Cytoplasmic. Residues cysteine 403, cysteine 404, and cysteine 406 are each lipidated (S-palmitoyl cysteine). Serine 420 is modified (phosphoserine). Phosphotyrosine is present on tyrosine 440. 3 positions are modified to phosphoserine: serine 441, serine 442, and serine 443.

It belongs to the G-protein coupled receptor 1 family. Endothelin receptor subfamily. EDNRB sub-subfamily.

It is found in the cell membrane. Functionally, non-specific receptor for endothelin 1, 2, and 3. Mediates its action by association with G proteins that activate a phosphatidylinositol-calcium second messenger system. This chain is Endothelin receptor type B (EDNRB), found in Sus scrofa (Pig).